The chain runs to 440 residues: MNPNQILENLKKELSENEYENYIAILKFNEKQSKADFLVFNAPNELLAKFIQTKYGKKISHFYEVQSGNKASVLIQAQSAKQSSKSTKIDIAHIKAQSTILNPSFTFESFVVGDSNKYAYGACKAISQKDKLGKLYNPIFIYGPTGLGKTHLLQAVGNASLEMGKKVIYATSENFINDFTSNLKNGSLDKFHEKYRNCDVLLIDDVQFLGKTDKIQEEFFFIFNEIKNNDGQIIMTSDNPPNMLKGITERLKSRFAHGIIADITPPQLDTKIAIIRKKCEFNDINLSNDIINYIATSLGDNIREIEGIIISLNAYATILGQEITLELAKSVMKDHIKEKKENITIDDILSLVCKEFNIKPSDVKSNKKTQNIVTARRIVIYLARALTALTMPQLANYFEMKDHTAISHNVKKITEMIENDGSLKAKIEELKNKILVKSQS.

The segment at 1-75 is domain I, interacts with DnaA modulators; the sequence is MNPNQILENL…QSGNKASVLI (75 aa). The interval 75 to 99 is domain II; the sequence is IQAQSAKQSSKSTKIDIAHIKAQST. The interval 100–316 is domain III, AAA+ region; sequence ILNPSFTFES…GIIISLNAYA (217 aa). Glycine 146, glycine 148, lysine 149, and threonine 150 together coordinate ATP. The tract at residues 317 to 440 is domain IV, binds dsDNA; that stretch reads TILGQEITLE…KNKILVKSQS (124 aa).

This sequence belongs to the DnaA family. As to quaternary structure, oligomerizes as a right-handed, spiral filament on DNA at oriC.

It is found in the cytoplasm. In terms of biological role, plays an essential role in the initiation and regulation of chromosomal replication. ATP-DnaA binds to the origin of replication (oriC) to initiate formation of the DNA replication initiation complex once per cell cycle. Binds the DnaA box (a 9 base pair repeat at the origin) and separates the double-stranded (ds)DNA. Forms a right-handed helical filament on oriC DNA; dsDNA binds to the exterior of the filament while single-stranded (ss)DNA is stabiized in the filament's interior. The ATP-DnaA-oriC complex binds and stabilizes one strand of the AT-rich DNA unwinding element (DUE), permitting loading of DNA polymerase. After initiation quickly degrades to an ADP-DnaA complex that is not apt for DNA replication. Binds acidic phospholipids. The sequence is that of Chromosomal replication initiator protein DnaA from Campylobacter jejuni subsp. jejuni serotype O:6 (strain 81116 / NCTC 11828).